The primary structure comprises 257 residues: Zinc transporter ZupT (257 aa).

Helical transmembrane passes span 5–25 (LILTLLAGAATFIGAILGVIG), 32–52 (VLAFSLGFAAGIMLLISLMEM), 61–81 (GMSPVMGYGMFVVGLLGYFAL), 109–129 (AILLTLGISLHNFPEGVATYV), 137–157 (LGFGIALAVALHNIPEGLAVA), 171–191 (ILWAGISGLAEILGGVLTWLI), 195–215 (MISPVVMAAIMAAVAGIMVAL), and 236–256 (GVLCGMSVMGLSLVLLQTAGF). Positions 120 and 123 each coordinate Fe(2+). Zn(2+) contacts are provided by E123 and H148. Fe(2+)-binding residues include N149, E152, and E181. Zn(2+) is bound at residue E152.

Belongs to the ZIP transporter (TC 2.A.5) family. ZupT subfamily.

The protein localises to the cell inner membrane. The enzyme catalyses Zn(2+)(in) = Zn(2+)(out). Mediates zinc uptake. May also transport other divalent cations. The protein is Zinc transporter ZupT of Enterobacter sp. (strain 638).